The chain runs to 187 residues: GTP cyclohydrolase 1 (187 aa).

Zn(2+) is bound by residues Cys78, His81, and Cys150.

It belongs to the GTP cyclohydrolase I family. In terms of assembly, homomer.

It catalyses the reaction GTP + H2O = 7,8-dihydroneopterin 3'-triphosphate + formate + H(+). Its pathway is cofactor biosynthesis; 7,8-dihydroneopterin triphosphate biosynthesis; 7,8-dihydroneopterin triphosphate from GTP: step 1/1. In Brevibacillus brevis (strain 47 / JCM 6285 / NBRC 100599), this protein is GTP cyclohydrolase 1.